Here is a 392-residue protein sequence, read N- to C-terminus: Quinolinate synthase (392 aa).

The segment at 1–23 is disordered; the sequence is MVDLPTTTPPAQPTTGNDEVDAL. The iminosuccinate site is built by H57 and S74. C131 lines the [4Fe-4S] cluster pocket. Residues 163–165 and S184 contribute to the iminosuccinate site; that span reads YIN. C254 is a [4Fe-4S] cluster binding site. Residues 280–282 and T297 each bind iminosuccinate; that span reads HPE. A [4Fe-4S] cluster-binding site is contributed by C344.

This sequence belongs to the quinolinate synthase family. Type 3 subfamily. [4Fe-4S] cluster serves as cofactor.

Its subcellular location is the cytoplasm. It carries out the reaction iminosuccinate + dihydroxyacetone phosphate = quinolinate + phosphate + 2 H2O + H(+). It participates in cofactor biosynthesis; NAD(+) biosynthesis; quinolinate from iminoaspartate: step 1/1. Catalyzes the condensation of iminoaspartate with dihydroxyacetone phosphate to form quinolinate. In Rhodopirellula baltica (strain DSM 10527 / NCIMB 13988 / SH1), this protein is Quinolinate synthase.